The sequence spans 168 residues: 3-isopropylmalate dehydratase small subunit (168 aa).

This sequence belongs to the LeuD family. LeuD type 2 subfamily. As to quaternary structure, heterodimer of LeuC and LeuD.

It carries out the reaction (2R,3S)-3-isopropylmalate = (2S)-2-isopropylmalate. Its pathway is amino-acid biosynthesis; L-leucine biosynthesis; L-leucine from 3-methyl-2-oxobutanoate: step 2/4. In terms of biological role, catalyzes the isomerization between 2-isopropylmalate and 3-isopropylmalate, via the formation of 2-isopropylmaleate. This chain is 3-isopropylmalate dehydratase small subunit (leuD), found in Sulfurisphaera tokodaii (strain DSM 16993 / JCM 10545 / NBRC 100140 / 7) (Sulfolobus tokodaii).